A 499-amino-acid chain; its full sequence is Serine carboxypeptidase 1 (499 aa).

An N-terminal signal peptide occupies residues 1-30 (MARCRRRSGCTAGAALLLLLALALSGGGGA). Cystine bridges form between C92-C388, C256-C268, and C291-C355. N-linked (GlcNAc...) asparagine glycosylation is present at N148. S188 is a catalytic residue. N262 is a glycosylation site (N-linked (GlcNAc...) asparagine). The propeptide at 297-351 (IKEVNLQNSKLPQSFKDLGTTNKPFPVRTRMLGRAWPLRAPVKAGRVPSWQEVAS) is linker peptide. N-linked (GlcNAc...) asparagine glycosylation occurs at N407. Active-site residues include D423 and H476. A Microbody targeting signal motif is present at residues 497–499 (SKL).

It belongs to the peptidase S10 family. In terms of assembly, carboxypeptidase I is a dimer, where each monomer is composed of two chains linked by disulfide bonds. The linker peptide is endoproteolytically excised during enzyme maturation.

The protein localises to the secreted. It catalyses the reaction Release of a C-terminal amino acid with broad specificity.. In terms of biological role, may be involved in the degradation of small peptides (2-5 residues) or in the degradation of storage proteins in the embryo. In Hordeum vulgare (Barley), this protein is Serine carboxypeptidase 1 (CBP1).